Here is a 179-residue protein sequence, read N- to C-terminus: Large ribosomal subunit protein uL6 (179 aa).

The protein belongs to the universal ribosomal protein uL6 family. In terms of assembly, part of the 50S ribosomal subunit.

In terms of biological role, this protein binds to the 23S rRNA, and is important in its secondary structure. It is located near the subunit interface in the base of the L7/L12 stalk, and near the tRNA binding site of the peptidyltransferase center. The protein is Large ribosomal subunit protein uL6 of Beutenbergia cavernae (strain ATCC BAA-8 / DSM 12333 / CCUG 43141 / JCM 11478 / NBRC 16432 / NCIMB 13614 / HKI 0122).